The chain runs to 850 residues: MSGKTRILFFLTCLSFLLVFPTRSNGQDLALSCGTSEASADQDKKKWEPDTKFLKTGNSIHATATYQDPSLLSTVPYMTARIFTAPATYEIPIKGDKRHLLRLYFYPSTYTGLNISNSYFTVEANDVTLLSNFSAAITCQALTQAYLVKEYSLAPTDKDVLSIKFTPSDKYRDAFAFINGIEVIQMPELFDTAALVGFTDQTMDAKTANLQSMFRLNVGGQDIPGSQDSGGLTRTWYNDAPYIFSAGLGVTLQASNNFRINYQNMPVSIAPADIYKTARSQGPNGDINLKSNLTWMFQIDKNFTYILRLHFCEFQLSKINQKVFNIYINNRTAQADTTPADIIGWTGEKGIPMYKDYAIYVDANNGGEEITLQMTPSTFGQPEYYDSSLNGLEIFKMDTMKNLAGPNPEPSPMQAEEEVKKEFKNEKRHAFIIGSAGGVLAVLIGALCFTAYKKKQGYQGGDSHTSSWLPIYGNSTTSGTKSTISGKSNNGSHLSNLAAGLCRRFSLPEIKHGTQNFDDSNVIGVGGFGKVYKGVIDGTTKVAVKKSNPNSEQGLNEFETEIELLSRLRHKHLVSLIGYCDEGGEMCLVYDYMAFGTLREHLYNTKKPQLTWKRRLEIAIGAARGLHYLHTGAKYTIIHRDVKTTNILVDENWVAKVSDFGLSKTGPNMNGGHVTTVVKGSFGYLDPEYFRRQQLTEKSDVYSFGVVLFEILCARPALNPSLPKEQVSLGDWAMNCKRKGNLEDIIDPNLKGKINAECLKKFADTAEKCLNDSGLERPTMGDVLWNLEFALQLQETADGTRHRTPNNGGSSEDLGRGGMAVNVAGRDDVSDLSSEDNTEIFSQIVNPKGR.

Positions 1–26 (MSGKTRILFFLTCLSFLLVFPTRSNG) are cleaved as a signal peptide. Residues 27 to 429 (QDLALSCGTS…KKEFKNEKRH (403 aa)) lie on the Extracellular side of the membrane. N-linked (GlcNAc...) asparagine glycans are attached at residues N114, N132, N292, N302, and N330. A helical transmembrane segment spans residues 430-450 (AFIIGSAGGVLAVLIGALCFT). Residues 451 to 850 (AYKKKQGYQG…FSQIVNPKGR (400 aa)) are Cytoplasmic-facing. Positions 517–790 (FDDSNVIGVG…GDVLWNLEFA (274 aa)) constitute a Protein kinase domain. ATP is bound by residues 523-531 (IGVGGFGKV) and K545. D641 (proton acceptor) is an active-site residue. The segment at 796–850 (TADGTRHRTPNNGGSSEDLGRGGMAVNVAGRDDVSDLSSEDNTEIFSQIVNPKGR) is disordered. Polar residues predominate over residues 839-850 (EIFSQIVNPKGR).

It belongs to the protein kinase superfamily. Ser/Thr protein kinase family. Expressed in pollen, but not in pistils or seedlings.

It is found in the cell membrane. It carries out the reaction L-seryl-[protein] + ATP = O-phospho-L-seryl-[protein] + ADP + H(+). The catalysed reaction is L-threonyl-[protein] + ATP = O-phospho-L-threonyl-[protein] + ADP + H(+). In terms of biological role, receptor-like protein kinase that controls pollen tube behavior by directing rupture at proper timing to release the sperm cell. The protein is Receptor-like protein kinase ANXUR1 (ANX1) of Arabidopsis thaliana (Mouse-ear cress).